The sequence spans 327 residues: Phenylalanine--tRNA ligase alpha subunit (327 aa).

Glu-252 contributes to the Mg(2+) binding site.

It belongs to the class-II aminoacyl-tRNA synthetase family. Phe-tRNA synthetase alpha subunit type 1 subfamily. As to quaternary structure, tetramer of two alpha and two beta subunits. Mg(2+) serves as cofactor.

The protein localises to the cytoplasm. The enzyme catalyses tRNA(Phe) + L-phenylalanine + ATP = L-phenylalanyl-tRNA(Phe) + AMP + diphosphate + H(+). This is Phenylalanine--tRNA ligase alpha subunit from Proteus mirabilis (strain HI4320).